A 1026-amino-acid polypeptide reads, in one-letter code: DNA cross-link repair 1A protein (1026 aa).

The interval 1-189 (MLEDTWEEEI…RDSKEPLGSP (189 aa)) is nuclear localization region. Residues 12–110 (EYKSKRKPKP…HRTRRGKQVT (99 aa)) are disordered. Residues 34–65 (SVEKSTDGKHQSKGNEKRTSENPGKTKDHKVC) show a composition bias toward basic and acidic residues. Over residues 71–82 (SQISAGSSQSSS) the composition is skewed to low complexity. A compositionally biased stretch (basic residues) spans 98–107 (KKQHRTRRGK). A UBZ4-type zinc finger spans residues 118 to 148 (DGYCPSCQMPFSSLLGQTPQWHVFECLDSPP). Cys121, Cys124, His139, and Cys143 together coordinate Zn(2+). Residues Lys359, Lys434, and Lys522 each participate in a glycyl lysine isopeptide (Lys-Gly) (interchain with G-Cter in SUMO2) cross-link. A nuclear focus formation region spans residues 401–602 (SQEDLPHTDA…SSLSDLEFDA (202 aa)). 3 disordered regions span residues 474–542 (PLEK…SKKV), 560–590 (ETSL…CKRK), and 602–651 (AKNL…PELG). A compositionally biased stretch (low complexity) spans 527-540 (SPSSPKCSPSQPSK). The span at 569–581 (EGPNVSPVVSPNQ) shows a compositional bias: polar residues. A phosphoserine mark is found at Ser574 and Ser578. Positions 619–628 (RQHRRKRHKT) are enriched in basic residues. A Glycyl lysine isopeptide (Lys-Gly) (interchain with G-Cter in SUMO2) cross-link involves residue Lys657.

This sequence belongs to the DNA repair metallo-beta-lactamase (DRMBL) family. In terms of assembly, binds constitutively to TP53BP1. Binds CDC27, which is itself a component of the anaphase promoting complex (APC). Binds PIAS1.

The protein localises to the nucleus. It catalyses the reaction a beta-lactam + H2O = a substituted beta-amino acid. In terms of biological role, may be required for DNA interstrand cross-link repair. Also required for checkpoint mediated cell cycle arrest in early prophase in response to mitotic spindle poisons. In Mus musculus (Mouse), this protein is DNA cross-link repair 1A protein (Dclre1a).